We begin with the raw amino-acid sequence, 245 residues long: Phosphoribosylaminoimidazole-succinocarboxamide synthase (245 aa).

This sequence belongs to the SAICAR synthetase family.

It catalyses the reaction 5-amino-1-(5-phospho-D-ribosyl)imidazole-4-carboxylate + L-aspartate + ATP = (2S)-2-[5-amino-1-(5-phospho-beta-D-ribosyl)imidazole-4-carboxamido]succinate + ADP + phosphate + 2 H(+). It functions in the pathway purine metabolism; IMP biosynthesis via de novo pathway; 5-amino-1-(5-phospho-D-ribosyl)imidazole-4-carboxamide from 5-amino-1-(5-phospho-D-ribosyl)imidazole-4-carboxylate: step 1/2. The sequence is that of Phosphoribosylaminoimidazole-succinocarboxamide synthase from Nostoc punctiforme (strain ATCC 29133 / PCC 73102).